The following is a 337-amino-acid chain: Dolichyl-phosphate beta-glucosyltransferase ALG5C (337 aa).

At 1–6 (MNDLPP) the chain is on the lumenal side. The chain crosses the membrane as a helical span at residues 7–27 (IANLISNILFVLLIITFLYAL). The Cytoplasmic portion of the chain corresponds to 28–337 (CSRFVSDKTL…ADTPISDFEV (310 aa)).

This sequence belongs to the glycosyltransferase 2 family.

The protein localises to the endoplasmic reticulum membrane. It carries out the reaction a di-trans,poly-cis-dolichyl phosphate + UDP-alpha-D-glucose = a di-trans,poly-cis-dolichyl beta-D-glucosyl phosphate + UDP. The protein operates within protein modification; protein glycosylation. Dolichyl-phosphate beta-glucosyltransferase involved in the glycosylation of glycoproteins through the synthesis of dolichyl beta-D-glucosyl phosphate which serves as a sugar donor for transfer of three glucose residues to the Man-9-GlcNAc-2-PP-dolichol precursor to N-glycans. The sequence is that of Dolichyl-phosphate beta-glucosyltransferase ALG5C from Trichomonas vaginalis (strain ATCC PRA-98 / G3).